Here is a 353-residue protein sequence, read N- to C-terminus: Virulence plasmid protein pGP2-D (353 aa).

The chain is Virulence plasmid protein pGP2-D from Chlamydia muridarum (strain MoPn / Nigg).